Consider the following 300-residue polypeptide: Iodotyrosine deiodinase (300 aa).

Residues 15–31 (VGLISVSIAAGVALGQL) traverse the membrane as a helical segment. Residues 110 to 114 (RRSVR), S138, and 138 to 139 (SG) contribute to the FMN site. Residues A140, E167, Y171, and K192 each contribute to the 3,5-diiodo-L-tyrosine site. Positions 140, 167, 171, and 192 each coordinate 3-iodo-L-tyrosine. Residues 247–249 (TTT) and R289 each bind FMN.

This sequence belongs to the nitroreductase family. It depends on FMN as a cofactor. In terms of processing, may be cleaved at Gln-55. The cleaved form retains catalytic activity.

The protein resides in the membrane. It catalyses the reaction 2 iodide + L-tyrosine + 2 NADP(+) = 3,5-diiodo-L-tyrosine + 2 NADPH + H(+). The catalysed reaction is iodide + L-tyrosine + NADP(+) = 3-iodo-L-tyrosine + NADPH. The enzyme catalyses 3-iodo-L-tyrosine + iodide + NADP(+) = 3,5-diiodo-L-tyrosine + NADPH + H(+). It carries out the reaction L-tyrosine + chloride + NADP(+) = 3-chloro-L-tyrosine + NADPH. It catalyses the reaction bromide + L-tyrosine + NADP(+) = 3-bromo-L-tyrosine + NADPH. Functionally, catalyzes the dehalogenation of halotyrosines such as 3,5-diiodo-L-tyrosine. Likely to also catalyze the dehalogenation of other halotyrosines such as 3-bromo-L-tyrosine, 3-chloro-L-tyrosine and 3-iodo-L-tyrosine. In Daphnia pulex (Water flea), this protein is Iodotyrosine deiodinase.